The following is a 406-amino-acid chain: MKLPIYLDYAATTPVDERVAKKMMEYMTKDGVFGNPASRSHKFGWEAEEAVDVARNQIADLIGADAREIVFTSGATESDNLAIKGAAHFYQTKGKHIITVKTEHKAVLDTCRQLEREGFEVTYLEPETTGLVDIAKLEAAIRPDTILVSVMQVNNEIGVIQPIEEIGKICRAKKIIFHVDATQSVGKIPVDVQALNVDLMSFSSHKLYGPKGIGGLYVCRKPRVRLEAIIHGGGHERGMRSGTLPVHQIVGMGEAYRIAKEEMVTEMPRIKALRDRLYNGFKDMEEVYVNGTMEAGKRVDSNLNISFNFVEGESMMMSLKDIAVSSGSACTSASLEPSYVLRALGLNDELAHSSIRFSIGRWTTEEEIDHTIEIVKKAVTKLRELSPLWDMFKEGIDLNSIEWSHH.

Residues 75–76 (AT), N155, Q183, and 203–205 (SSH) contribute to the pyridoxal 5'-phosphate site. K206 bears the N6-(pyridoxal phosphate)lysine mark. Position 243 (T243) interacts with pyridoxal 5'-phosphate. C330 acts as the Cysteine persulfide intermediate in catalysis. C330 is a binding site for [2Fe-2S] cluster.

It belongs to the class-V pyridoxal-phosphate-dependent aminotransferase family. NifS/IscS subfamily. In terms of assembly, homodimer. Forms a heterotetramer with IscU, interacts with other sulfur acceptors. Requires pyridoxal 5'-phosphate as cofactor.

Its subcellular location is the cytoplasm. It carries out the reaction (sulfur carrier)-H + L-cysteine = (sulfur carrier)-SH + L-alanine. It functions in the pathway cofactor biosynthesis; iron-sulfur cluster biosynthesis. Its function is as follows. Master enzyme that delivers sulfur to a number of partners involved in Fe-S cluster assembly, tRNA modification or cofactor biosynthesis. Catalyzes the removal of elemental sulfur atoms from cysteine to produce alanine. Functions as a sulfur delivery protein for Fe-S cluster synthesis onto IscU, an Fe-S scaffold assembly protein, as well as other S acceptor proteins. The sequence is that of Cysteine desulfurase IscS from Glaesserella parasuis serovar 5 (strain SH0165) (Haemophilus parasuis).